A 146-amino-acid polypeptide reads, in one-letter code: 3-dehydroquinate dehydratase (146 aa).

Residue Tyr-23 is the Proton acceptor of the active site. The substrate site is built by Asn-74, His-80, and Asp-87. Residue His-100 is the Proton donor of the active site. Residues 101 to 102 (IS) and Arg-111 contribute to the substrate site.

Belongs to the type-II 3-dehydroquinase family. In terms of assembly, homododecamer.

The enzyme catalyses 3-dehydroquinate = 3-dehydroshikimate + H2O. It participates in metabolic intermediate biosynthesis; chorismate biosynthesis; chorismate from D-erythrose 4-phosphate and phosphoenolpyruvate: step 3/7. Catalyzes a trans-dehydration via an enolate intermediate. The polypeptide is 3-dehydroquinate dehydratase (Bacillus cereus (strain AH820)).